The primary structure comprises 429 residues: Glutamate-1-semialdehyde 2,1-aminomutase (429 aa).

Lysine 265 is modified (N6-(pyridoxal phosphate)lysine).

The protein belongs to the class-III pyridoxal-phosphate-dependent aminotransferase family. HemL subfamily. Homodimer. It depends on pyridoxal 5'-phosphate as a cofactor.

Its subcellular location is the cytoplasm. The catalysed reaction is (S)-4-amino-5-oxopentanoate = 5-aminolevulinate. The protein operates within porphyrin-containing compound metabolism; protoporphyrin-IX biosynthesis; 5-aminolevulinate from L-glutamyl-tRNA(Glu): step 2/2. The protein is Glutamate-1-semialdehyde 2,1-aminomutase of Legionella pneumophila (strain Corby).